Reading from the N-terminus, the 285-residue chain is Diphthine methyl ester synthase (285 aa).

Residues Leu9, Asp84, Gly87, 112–113 (SI), Leu163, Val221, and His246 each bind S-adenosyl-L-methionine.

This sequence belongs to the diphthine synthase family.

The protein localises to the cytoplasm. It carries out the reaction 2-[(3S)-amino-3-carboxypropyl]-L-histidyl-[translation elongation factor 2] + 4 S-adenosyl-L-methionine = diphthine methyl ester-[translation elongation factor 2] + 4 S-adenosyl-L-homocysteine + 3 H(+). Its pathway is protein modification; peptidyl-diphthamide biosynthesis. In terms of biological role, S-adenosyl-L-methionine-dependent methyltransferase that catalyzes four methylations of the modified target histidine residue in translation elongation factor 2 (EF-2), to form an intermediate called diphthine methyl ester. The four successive methylation reactions represent the second step of diphthamide biosynthesis. This Aspergillus fumigatus (strain ATCC MYA-4609 / CBS 101355 / FGSC A1100 / Af293) (Neosartorya fumigata) protein is Diphthine methyl ester synthase (dph5).